The sequence spans 230 residues: Flagellar L-ring protein (230 aa).

The signal sequence occupies residues 1–21 (MMLKTVLRLPVCAALLALAAG). C22 carries the N-palmitoyl cysteine lipid modification. C22 carries S-diacylglycerol cysteine lipidation. Positions 34 to 53 (PLTAPPPPPPQPSARPNGSI) are disordered. The span at 36–46 (TAPPPPPPQPS) shows a compositional bias: pro residues.

The protein belongs to the FlgH family. The basal body constitutes a major portion of the flagellar organelle and consists of four rings (L,P,S, and M) mounted on a central rod.

It localises to the cell outer membrane. Its subcellular location is the bacterial flagellum basal body. Functionally, assembles around the rod to form the L-ring and probably protects the motor/basal body from shearing forces during rotation. In Bordetella bronchiseptica (strain ATCC BAA-588 / NCTC 13252 / RB50) (Alcaligenes bronchisepticus), this protein is Flagellar L-ring protein.